The primary structure comprises 499 residues: MDNMNHEELNDQLLVRREKLHNLREQGIDPFGKRFERTNSTTDLVSLYGEFSKEELEEKEITVSIAGRIMTKRGKGKAGFAHIQDLQGQVQIYVRKDTVGDEEYELFTTADLGDLVGIEGKVFKTNVGELSVKAIGFTLLTKSLRPLPDKYHGLKDVEQRYRQRYLDLITSMESRETFVTRSKIIREMRRYLDDNGYLEVETPMMHAIAGGASARPFTTHHNALDMELYMRIAIELHLKRLIVGGLEKVYEIGRVFRNEGVSTRHNPEFTMIELYEAYADYNDIMKLTENMVAHIAKKVLGTTTIQYGDYEINLEPEWTRLHMVDAIKQHSGADFWNPMSVEEARELAKEHNVEIKNTMEVGHIINEFFEQKVEDKLIQPTFIYGHPVEISPLAKKNDEDPRFTDRFELFIVAREHANAFTELNDPIDQKERFEAQLKEREQGNDEAHMMDDDYIEALEYGMPPTGGLGIGIDRLVMLLTNAPSIRDVLLFPAMRHKQD.

Positions 408 and 415 each coordinate Mg(2+).

Belongs to the class-II aminoacyl-tRNA synthetase family. As to quaternary structure, homodimer. Mg(2+) is required as a cofactor.

It is found in the cytoplasm. It carries out the reaction tRNA(Lys) + L-lysine + ATP = L-lysyl-tRNA(Lys) + AMP + diphosphate. This Bacillus mycoides (strain KBAB4) (Bacillus weihenstephanensis) protein is Lysine--tRNA ligase.